The primary structure comprises 361 residues: Tyrosine--tRNA ligase (361 aa).

Positions 36, 162, 166, 169, and 184 each coordinate L-tyrosine. A 'KMSKS' region motif is present at residues 236 to 240 (KMSKS). K239 provides a ligand contact to ATP.

The protein belongs to the class-I aminoacyl-tRNA synthetase family. TyrS type 4 subfamily. As to quaternary structure, homodimer.

Its subcellular location is the cytoplasm. It catalyses the reaction tRNA(Tyr) + L-tyrosine + ATP = L-tyrosyl-tRNA(Tyr) + AMP + diphosphate + H(+). In terms of biological role, catalyzes the attachment of tyrosine to tRNA(Tyr) in a two-step reaction: tyrosine is first activated by ATP to form Tyr-AMP and then transferred to the acceptor end of tRNA(Tyr). In Saccharolobus islandicus (strain Y.N.15.51 / Yellowstone #2) (Sulfolobus islandicus), this protein is Tyrosine--tRNA ligase.